The following is an 854-amino-acid chain: Patatin-like phospholipase domain-containing protein CHGG_02900 (854 aa).

3 disordered regions span residues 1–29, 58–138, and 159–186; these read MAGPGYDRVDSKDDEPPNIQIPSRTYGFP, LSAP…PPLS, and QRRVARAKTAPQSSSRNDKKKKRARSKD. The segment covering 96–116 has biased composition (basic and acidic residues); it reads DLARRPESSGVGFHDEDRTAR. Residues 119-132 are compositionally biased toward low complexity; that stretch reads PAGAATAAAAGVAT. A helical transmembrane segment spans residues 199-219; sequence WPLLGVVTCWLVGLSVVHVLA. Residues 387–578 enclose the PNPLA domain; that stretch reads LCLSGGATFA…RTDIPIKALN (192 aa). The GXSXG motif lies at 418–422; that stretch reads GTSGG. Catalysis depends on S420, which acts as the Nucleophile. Catalysis depends on D565, which acts as the Proton acceptor. Disordered regions lie at residues 724–776 and 791–830; these read RENR…SILS and RGGIGSGETESEDETSDLDADFYEGITYDGGDDDAGLEFG. Residues 729–751 show a composition bias toward gly residues; that stretch reads GGGLGDGGVGSSGGAGGGAGGGQ. The segment covering 752-761 has biased composition (low complexity); that stretch reads AEAVAGQAAG. The span at 799 to 812 shows a compositional bias: acidic residues; it reads TESEDETSDLDADF.

This sequence belongs to the PLPL family.

It localises to the membrane. Functionally, probable lipid hydrolase. This Chaetomium globosum (strain ATCC 6205 / CBS 148.51 / DSM 1962 / NBRC 6347 / NRRL 1970) (Soil fungus) protein is Patatin-like phospholipase domain-containing protein CHGG_02900.